The following is a 160-amino-acid chain: Nascent polypeptide-associated complex subunit alpha (160 aa).

The 66-residue stretch at 10–75 (TKGEKKTREA…HSFDDIASRL (66 aa)) folds into the NAC-A/B domain. The UBA domain occupies 120–159 (VNPKDVEVVMKETKASREKVVETLIATKNDLVSAVLELTT).

This sequence belongs to the NAC-alpha family. In terms of assembly, part of the nascent polypeptide-associated complex (NAC), consisting of nacA and nacB.

It is found in the cytoplasm. It localises to the nucleus. In terms of biological role, component of the nascent polypeptide-associated complex (NAC), a dynamic component of the ribosomal exit tunnel, protecting the emerging polypeptides from interaction with other cytoplasmic proteins to ensure appropriate nascent protein targeting. The NAC complex also promotes mitochondrial protein import by enhancing productive ribosome interactions with the outer mitochondrial membrane and blocks the inappropriate interaction of ribosomes translating non-secretory nascent polypeptides with translocation sites in the membrane of the endoplasmic reticulum. May also be involved in transcription regulation. This chain is Nascent polypeptide-associated complex subunit alpha (nacA), found in Dictyostelium discoideum (Social amoeba).